A 231-amino-acid polypeptide reads, in one-letter code: Cilia- and flagella-associated protein 299 (231 aa).

It localises to the cytoplasm. It is found in the nucleus. Functionally, may be involved in spermatogenesis. This chain is Cilia- and flagella-associated protein 299, found in Bos taurus (Bovine).